A 44-amino-acid polypeptide reads, in one-letter code: M-factor (44 aa).

The propeptide occupies Met-1–Asn-32. At Cys-41 the chain carries Cysteine methyl ester. A lipid anchor (S-farnesyl cysteine) is attached at Cys-41. Positions Val-42–Ala-44 are cleaved as a propeptide — removed in mature form.

It is found in the secreted. Its function is as follows. M-factor is a mating pheromone produced by M-type mating cells. All three mfm genes contribute to the production of M-factor. The sequence is that of M-factor (mfm2) from Schizosaccharomyces pombe (strain 972 / ATCC 24843) (Fission yeast).